Here is a 343-residue protein sequence, read N- to C-terminus: Zinc finger protein STP3 (343 aa).

Disordered regions lie at residues 31-56 (YNGE…SGSA) and 71-140 (SNDV…KPRK). Residues 33–45 (GEASSASTHPTLP) show a composition bias toward polar residues. Composition is skewed to low complexity over residues 46–56 (NMNISNGSGSA), 71–86 (SNDV…FLPS), and 94–120 (SASA…AGPS). Residues serine 71 and serine 111 each carry the phosphoserine modification. The C2H2-type zinc finger occupies 169 to 191 (HKCPICHRGFARNNDLLRHKKRH). The segment at 198–222 (SQSGVLSNHNDGKGGSVSPNDDDTH) is disordered.

The protein resides in the nucleus. The sequence is that of Zinc finger protein STP3 (STP3) from Saccharomyces cerevisiae (strain ATCC 204508 / S288c) (Baker's yeast).